The following is a 219-amino-acid chain: Lipid transferase CIDEA (219 aa).

In terms of domain architecture, CIDE-N spans proline 33 to proline 110. The amphipathic helix stretch occupies residues cysteine 163–serine 180.

This sequence belongs to the CIDE family. In terms of assembly, homodimer. Interacts with CIDEC. Directly interacts with CEBPB. Interacts with isoform CLSTN3beta of CLSTN3; inhibiting the lipid transferase activity of CIDEA. In terms of tissue distribution, expressed in omental and subcutaneous adipose tissue (at protein level).

It localises to the lipid droplet. The protein localises to the nucleus. It catalyses the reaction a triacyl-sn-glycerol(in) = a triacyl-sn-glycerol(out). Functionally, lipid transferase that promotes unilocular lipid droplet formation by mediating lipid droplet fusion. Lipid droplet fusion promotes their enlargement, restricting lipolysis and favoring lipid storage. Localizes on the lipid droplet surface, at focal contact sites between lipid droplets, and mediates atypical lipid droplet fusion by promoting directional net neutral lipid transfer from the smaller to larger lipid droplets. The transfer direction may be driven by the internal pressure difference between the contacting lipid droplet pair and occurs at a lower rate than that promoted by CIDEC. May also act as a CEBPB coactivator in epithelial cells to control the expression of a subset of CEBPB downstream target genes, including ID2, IGF1, PRLR, SOCS1, SOCS3, XDH, but not casein. By interacting with CEBPB, strengthens the association of CEBPB with the XDH promoter, increases histone acetylation and dissociates HDAC1 from the promoter. When overexpressed, induces apoptosis; the physiological significance of its role in apoptosis is unclear. The polypeptide is Lipid transferase CIDEA (Homo sapiens (Human)).